The sequence spans 544 residues: WD repeat-containing protein 25 (544 aa).

2 disordered regions span residues 17–74 and 183–208; these read DSDS…EDPG and QRQA…GRAP. Polar residues predominate over residues 30-39; the sequence is FNATGQQKDT. WD repeat units lie at residues 244 to 286, 290 to 329, 330 to 373, 375 to 420, 424 to 463, 469 to 510, and 513 to 544; these read GHRG…HCLQ, LHTE…QLFS, GRSD…RSYK, TIQQ…KISN, HERF…RMSR, GHKV…RACT, and GHTQ…KIWH.

As to expression, expressed in heart, muscle, testis, ovary, uterus and prostate.

This is WD repeat-containing protein 25 from Homo sapiens (Human).